A 61-amino-acid polypeptide reads, in one-letter code: Metallothionein-1B (61 aa).

A beta region spans residues 1 to 29; that stretch reads MDPNCSCTTGGSCACAGSCKCKECKCTSC. A divalent metal cation contacts are provided by Cys-5, Cys-7, Cys-13, Cys-15, Cys-19, Cys-21, Cys-24, Cys-26, Cys-29, Cys-33, Cys-34, Cys-36, Cys-37, Cys-41, Cys-44, Cys-48, Cys-50, Cys-57, Cys-59, and Cys-60. The segment at 30-61 is alpha; it reads KKCCCSCCPVGCAKCAQGCVCKGSSEKCRCCA.

Belongs to the metallothionein superfamily. Type 1 family. As to quaternary structure, monomer.

In terms of biological role, metallothioneins have a high content of cysteine residues that bind various heavy metals; these proteins are transcriptionally regulated by both heavy metals and glucocorticoids. This is Metallothionein-1B (MT1B) from Homo sapiens (Human).